Consider the following 556-residue polypeptide: 2-succinyl-5-enolpyruvyl-6-hydroxy-3-cyclohexene-1-carboxylate synthase (556 aa).

This sequence belongs to the TPP enzyme family. MenD subfamily. In terms of assembly, homodimer. Mg(2+) is required as a cofactor. It depends on Mn(2+) as a cofactor. The cofactor is thiamine diphosphate.

The catalysed reaction is isochorismate + 2-oxoglutarate + H(+) = 5-enolpyruvoyl-6-hydroxy-2-succinyl-cyclohex-3-ene-1-carboxylate + CO2. Its pathway is quinol/quinone metabolism; 1,4-dihydroxy-2-naphthoate biosynthesis; 1,4-dihydroxy-2-naphthoate from chorismate: step 2/7. It participates in quinol/quinone metabolism; menaquinone biosynthesis. Its function is as follows. Catalyzes the thiamine diphosphate-dependent decarboxylation of 2-oxoglutarate and the subsequent addition of the resulting succinic semialdehyde-thiamine pyrophosphate anion to isochorismate to yield 2-succinyl-5-enolpyruvyl-6-hydroxy-3-cyclohexene-1-carboxylate (SEPHCHC). The protein is 2-succinyl-5-enolpyruvyl-6-hydroxy-3-cyclohexene-1-carboxylate synthase of Escherichia fergusonii (strain ATCC 35469 / DSM 13698 / CCUG 18766 / IAM 14443 / JCM 21226 / LMG 7866 / NBRC 102419 / NCTC 12128 / CDC 0568-73).